The sequence spans 997 residues: Glutamate [NMDA] receptor subunit 1 (997 aa).

The N-terminal stretch at M1–A26 is a signal peptide. Over A27–S573 the chain is Extracellular. Residues N258, N314, N345, N397, N454, N481, and N501 are each glycosylated (N-linked (GlcNAc...) asparagine). Glycine is bound by residues P530–T532 and R537. A helical membrane pass occupies residues N574–L594. Topologically, residues D595–W651 are cytoplasmic. A helical transmembrane segment spans residues A652 to L672. Residues E673–N831 lie on the Extracellular side of the membrane. An N-linked (GlcNAc...) asparagine glycan is attached at N693. Residues S703 and D747 each contribute to the glycine site. A helical membrane pass occupies residues M832 to I852. Residues E853–V997 lie on the Cytoplasmic side of the membrane. The interval L970–V997 is disordered. A compositionally biased stretch (polar residues) spans G987–V997.

Belongs to the glutamate-gated ion channel (TC 1.A.10.1) family. As to quaternary structure, forms a heteromeric NMDA channel with Nmdar2.

The protein resides in the cell membrane. The protein localises to the postsynaptic cell membrane. It localises to the postsynaptic density. Functionally, NMDA receptor subtype of glutamate-gated ion channels with high calcium permeability and voltage-dependent sensitivity to magnesium. Mediated by glycine. This protein plays a key role in synaptic plasticity, synaptogenesis, excitotoxicity, memory acquisition and learning. It mediates neuronal functions in glutamate neurotransmission. Is involved in the cell surface targeting of NMDA receptors. Plays a role in associative learning and in long-term memory consolidation. The chain is Glutamate [NMDA] receptor subunit 1 from Drosophila yakuba (Fruit fly).